We begin with the raw amino-acid sequence, 187 residues long: Ribonuclease HII (187 aa).

Residues 1-187 form the RNase H type-2 domain; it reads MIILGIDEAG…YKPVQVLLNE (187 aa). Residues Asp-7, Glu-8, and Asp-99 each contribute to the a divalent metal cation site.

This sequence belongs to the RNase HII family. Mn(2+) serves as cofactor. The cofactor is Mg(2+).

It is found in the cytoplasm. The enzyme catalyses Endonucleolytic cleavage to 5'-phosphomonoester.. Its function is as follows. Endonuclease that specifically degrades the RNA of RNA-DNA hybrids. In Francisella tularensis subsp. tularensis (strain FSC 198), this protein is Ribonuclease HII.